Consider the following 406-residue polypeptide: MNQNPIPNSFRSGPDEDGRFGIFGGRFVAETLMPLILDLQAEWENAKTDPSFKAELDHLNTHYTGRPSPLYFAERLTAELGGAKIYFKRDELNHTGSHKINNCLGQILLAKRMGKTRIIAETGAGQHGVASATVAARFGLPCIVYMGATDVERQAPNVFRMKLLGAEVRPVSSGHGTLKDAMNEALRDWVTNVDETYYMIGTAAGPHPYPEMVREFQSVIGKESREQMMAAEGRLPDMLVAAVGGGSNAIGLFHPFLDDESVRMIGVEAGGKGLDGNEHCASLTAGSPGVLHGNRTYLLQDSDGQIKDGHSISAGLDYPGIGPEHSWLKDIGRVEYVPIMDTEALEAFQLLTRTEGIIPALEPSHALAEVMKRAPKMGKDEIILMNLCGRGDKDIFTVGKILGMGL.

Lysine 99 is subject to N6-(pyridoxal phosphate)lysine.

The protein belongs to the TrpB family. As to quaternary structure, tetramer of two alpha and two beta chains. Requires pyridoxal 5'-phosphate as cofactor.

It carries out the reaction (1S,2R)-1-C-(indol-3-yl)glycerol 3-phosphate + L-serine = D-glyceraldehyde 3-phosphate + L-tryptophan + H2O. It participates in amino-acid biosynthesis; L-tryptophan biosynthesis; L-tryptophan from chorismate: step 5/5. The beta subunit is responsible for the synthesis of L-tryptophan from indole and L-serine. The protein is Tryptophan synthase beta chain of Allorhizobium ampelinum (strain ATCC BAA-846 / DSM 112012 / S4) (Agrobacterium vitis (strain S4)).